The primary structure comprises 136 residues: Large ribosomal subunit protein uL16 (136 aa).

This sequence belongs to the universal ribosomal protein uL16 family. As to quaternary structure, part of the 50S ribosomal subunit.

Binds 23S rRNA and is also seen to make contacts with the A and possibly P site tRNAs. This chain is Large ribosomal subunit protein uL16, found in Citrobacter koseri (strain ATCC BAA-895 / CDC 4225-83 / SGSC4696).